A 438-amino-acid chain; its full sequence is Glyceraldehyde-3-phosphate dehydrogenase B, chloroplastic (438 aa).

Residues 1-53 constitute a chloroplast transit peptide; it reads CLSKKFEVAEFAGLRSSGCVTFSNKESSFFDVVSAQLTPKTTRSTPVKGETVA. NADP(+)-binding positions include 64-65, Asp-88, and Arg-133; that span reads RI. Residues 207 to 209, Thr-238, Arg-253, 266 to 267, and Arg-289 contribute to the D-glyceraldehyde 3-phosphate site; these read SCT and TG. Catalysis depends on Cys-208, which acts as the Nucleophile. Asn-372 is an NADP(+) binding site.

This sequence belongs to the glyceraldehyde-3-phosphate dehydrogenase family. As to quaternary structure, tetramer of either four A chains (GAPDH 2) or two A and two B chains (GAPDH 1).

The protein localises to the plastid. It is found in the chloroplast. The catalysed reaction is D-glyceraldehyde 3-phosphate + phosphate + NADP(+) = (2R)-3-phospho-glyceroyl phosphate + NADPH + H(+). It functions in the pathway carbohydrate biosynthesis; Calvin cycle. The sequence is that of Glyceraldehyde-3-phosphate dehydrogenase B, chloroplastic (GAPB) from Nicotiana tabacum (Common tobacco).